Consider the following 540-residue polypeptide: Maintenance of mitochondrial morphology protein 1 (540 aa).

Residues 1-25 are Lumenal-facing; sequence MAGPSNQTQPPPPVLTQPSLSFTQG. A helical membrane pass occupies residues 26-46; sequence LLVGQLSVVLLIGAFIKFFIF. The Cytoplasmic portion of the chain corresponds to 47 to 540; the sequence is GEAPPHPSRN…GSMPDPVVVT (494 aa). Disordered regions lie at residues 52-135, 275-331, 416-471, and 509-540; these read HPSR…SHQP, GPGT…ATAA, GRTG…GGSM, and YGGA…VVVT. Polar residues-rich tracts occupy residues 69 to 81, 88 to 105, and 112 to 121; these read YSLN…SSPR, STSN…NTRS, and YSATPTNPTS. The span at 122–132 shows a compositional bias: basic residues; sequence KHSRSRPHHSS. An SMP-LTD domain is found at 134-409; that stretch reads QPESLDWFNV…EPRVQVVGLP (276 aa). Over residues 321–331 the composition is skewed to low complexity; that stretch reads TNTNTAGATAA. Composition is skewed to gly residues over residues 442-471 and 511-521; these read TAGG…GGSM and GAQGGGGGGGR.

This sequence belongs to the MMM1 family. As to quaternary structure, homodimer. Component of the ER-mitochondria encounter structure (ERMES) or MDM complex, composed of MMM1, MDM10, MDM12 and MDM34. An MMM1 homodimer associates with one molecule of MDM12 on each side in a pairwise head-to-tail manner, and the SMP-LTD domains of MMM1 and MDM12 generate a continuous hydrophobic tunnel for phospholipid trafficking.

It localises to the endoplasmic reticulum membrane. Component of the ERMES/MDM complex, which serves as a molecular tether to connect the endoplasmic reticulum (ER) and mitochondria. Components of this complex are involved in the control of mitochondrial shape and protein biogenesis, and function in nonvesicular lipid trafficking between the ER and mitochondria. The MDM12-MMM1 subcomplex functions in the major beta-barrel assembly pathway that is responsible for biogenesis of all outer membrane beta-barrel proteins, and acts in a late step after the SAM complex. The MDM10-MDM12-MMM1 subcomplex further acts in the TOM40-specific pathway after the action of the MDM12-MMM1 complex. Essential for establishing and maintaining the structure of mitochondria and maintenance of mtDNA nucleoids. In Blastomyces gilchristii (strain SLH14081) (Blastomyces dermatitidis), this protein is Maintenance of mitochondrial morphology protein 1.